The primary structure comprises 388 residues: Arginine biosynthesis bifunctional protein ArgJ 2 (388 aa).

Substrate-binding residues include Thr-145, Lys-167, Thr-178, Glu-257, and Asn-381. The Nucleophile role is filled by Thr-178.

This sequence belongs to the ArgJ family. In terms of assembly, heterotetramer of two alpha and two beta chains.

Its subcellular location is the cytoplasm. The catalysed reaction is N(2)-acetyl-L-ornithine + L-glutamate = N-acetyl-L-glutamate + L-ornithine. It catalyses the reaction L-glutamate + acetyl-CoA = N-acetyl-L-glutamate + CoA + H(+). The protein operates within amino-acid biosynthesis; L-arginine biosynthesis; L-ornithine and N-acetyl-L-glutamate from L-glutamate and N(2)-acetyl-L-ornithine (cyclic): step 1/1. It functions in the pathway amino-acid biosynthesis; L-arginine biosynthesis; N(2)-acetyl-L-ornithine from L-glutamate: step 1/4. In terms of biological role, catalyzes two activities which are involved in the cyclic version of arginine biosynthesis: the synthesis of N-acetylglutamate from glutamate and acetyl-CoA as the acetyl donor, and of ornithine by transacetylation between N(2)-acetylornithine and glutamate. The chain is Arginine biosynthesis bifunctional protein ArgJ 2 from Clostridium acetobutylicum (strain ATCC 824 / DSM 792 / JCM 1419 / IAM 19013 / LMG 5710 / NBRC 13948 / NRRL B-527 / VKM B-1787 / 2291 / W).